We begin with the raw amino-acid sequence, 342 residues long: Tetraacyldisaccharide 4'-kinase (342 aa).

Residue Thr-68–Thr-75 participates in ATP binding.

Belongs to the LpxK family.

The enzyme catalyses a lipid A disaccharide + ATP = a lipid IVA + ADP + H(+). It participates in glycolipid biosynthesis; lipid IV(A) biosynthesis; lipid IV(A) from (3R)-3-hydroxytetradecanoyl-[acyl-carrier-protein] and UDP-N-acetyl-alpha-D-glucosamine: step 6/6. Its function is as follows. Transfers the gamma-phosphate of ATP to the 4'-position of a tetraacyldisaccharide 1-phosphate intermediate (termed DS-1-P) to form tetraacyldisaccharide 1,4'-bis-phosphate (lipid IVA). This chain is Tetraacyldisaccharide 4'-kinase, found in Burkholderia ambifaria (strain ATCC BAA-244 / DSM 16087 / CCUG 44356 / LMG 19182 / AMMD) (Burkholderia cepacia (strain AMMD)).